The following is a 167-amino-acid chain: Alanine- and arginine-rich domain-containing protein (167 aa).

The interval 140–167 (LKKRQDQELASKPQSPQDKEMNSECGSA) is disordered.

Preferentially expressed in testis both in embryo and adult. Expressed at much lower level in other tissues.

The chain is Alanine- and arginine-rich domain-containing protein (Aard) from Mus musculus (Mouse).